The chain runs to 207 residues: Na(+)-translocating ferredoxin:NAD(+) oxidoreductase complex subunit G (207 aa).

Residues 18–38 (GLILFVISAVAACALALTNYV) form a helical membrane-spanning segment. Threonine 185 carries the post-translational modification FMN phosphoryl threonine.

This sequence belongs to the RnfG family. The complex is composed of six subunits: RnfA, RnfB, RnfC, RnfD, RnfE and RnfG. Requires FMN as cofactor.

It localises to the cell membrane. The enzyme catalyses 2 reduced [2Fe-2S]-[ferredoxin] + Na(+)(in) + NAD(+) + H(+) = 2 oxidized [2Fe-2S]-[ferredoxin] + Na(+)(out) + NADH. Part of a membrane-bound complex that couples electron transfer with translocation of ions across the membrane. Couples electron transfer from reduced ferredoxin to NAD(+) with electrogenic movement of Na(+) out of the cell. Involved in caffeate respiration. The chain is Na(+)-translocating ferredoxin:NAD(+) oxidoreductase complex subunit G from Acetobacterium woodii (strain ATCC 29683 / DSM 1030 / JCM 2381 / KCTC 1655 / WB1).